The chain runs to 141 residues: Large ribosomal subunit protein uL11 (141 aa).

The protein belongs to the universal ribosomal protein uL11 family. Part of the ribosomal stalk of the 50S ribosomal subunit. Interacts with L10 and the large rRNA to form the base of the stalk. L10 forms an elongated spine to which L12 dimers bind in a sequential fashion forming a multimeric L10(L12)X complex. Post-translationally, one or more lysine residues are methylated.

Functionally, forms part of the ribosomal stalk which helps the ribosome interact with GTP-bound translation factors. This chain is Large ribosomal subunit protein uL11, found in Acetivibrio thermocellus (strain ATCC 27405 / DSM 1237 / JCM 9322 / NBRC 103400 / NCIMB 10682 / NRRL B-4536 / VPI 7372) (Clostridium thermocellum).